The sequence spans 170 residues: Co-chaperone protein HscB homolog (170 aa).

Residues 5-79 (DHFSLFGLPA…RARYLCEQAG (75 aa)) form the J domain.

This sequence belongs to the HscB family. As to quaternary structure, interacts with HscA and stimulates its ATPase activity.

Functionally, co-chaperone involved in the maturation of iron-sulfur cluster-containing proteins. Seems to help targeting proteins to be folded toward HscA. The chain is Co-chaperone protein HscB homolog from Bordetella parapertussis (strain 12822 / ATCC BAA-587 / NCTC 13253).